Here is a 64-residue protein sequence, read N- to C-terminus: Large ribosomal subunit protein bL35 (64 aa).

Over residues G22–R31 the composition is skewed to basic residues. The segment at G22–I64 is disordered.

Belongs to the bacterial ribosomal protein bL35 family.

The protein is Large ribosomal subunit protein bL35 of Mesomycoplasma hyopneumoniae (strain 232) (Mycoplasma hyopneumoniae).